The primary structure comprises 125 residues: Large ribosomal subunit protein bL12 (125 aa).

This sequence belongs to the bacterial ribosomal protein bL12 family. As to quaternary structure, homodimer. Part of the ribosomal stalk of the 50S ribosomal subunit. Forms a multimeric L10(L12)X complex, where L10 forms an elongated spine to which 2 to 4 L12 dimers bind in a sequential fashion. Binds GTP-bound translation factors.

Forms part of the ribosomal stalk which helps the ribosome interact with GTP-bound translation factors. Is thus essential for accurate translation. The chain is Large ribosomal subunit protein bL12 from Helicobacter pylori (strain HPAG1).